We begin with the raw amino-acid sequence, 147 residues long: Methylated-DNA--protein-cysteine methyltransferase (147 aa).

Cys112 acts as the Nucleophile; methyl group acceptor in catalysis.

It belongs to the MGMT family.

Its subcellular location is the cytoplasm. The catalysed reaction is a 6-O-methyl-2'-deoxyguanosine in DNA + L-cysteinyl-[protein] = S-methyl-L-cysteinyl-[protein] + a 2'-deoxyguanosine in DNA. The enzyme catalyses a 4-O-methyl-thymidine in DNA + L-cysteinyl-[protein] = a thymidine in DNA + S-methyl-L-cysteinyl-[protein]. In terms of biological role, involved in the cellular defense against the biological effects of O6-methylguanine (O6-MeG) and O4-methylthymine (O4-MeT) in DNA. Repairs the methylated nucleobase in DNA by stoichiometrically transferring the methyl group to a cysteine residue in the enzyme. This is a suicide reaction: the enzyme is irreversibly inactivated. This chain is Methylated-DNA--protein-cysteine methyltransferase, found in Archaeoglobus fulgidus (strain ATCC 49558 / DSM 4304 / JCM 9628 / NBRC 100126 / VC-16).